Reading from the N-terminus, the 493-residue chain is Keratin, type II cuticular Hb3 (493 aa).

Residues 1 to 111 (MTCGFNSIGC…PNAQCVKQEE (111 aa)) form a head region. The 312-residue stretch at 111-422 (EKEQIKSLNS…RLLEGEEQRL (312 aa)) folds into the IF rod domain. The tract at residues 112-146 (KEQIKSLNSRFAAFIDKVRFLEQQNKLLETKLQFY) is coil 1A. The segment at 147–156 (QNRECCQSNL) is linker 1. Residues 157–257 (EPLFAGYIET…YEEEIRILQS (101 aa)) are coil 1B. A Glycyl lysine isopeptide (Lys-Gly) (interchain with G-Cter in SUMO1) cross-link involves residue Lys-217. A linker 12 region spans residues 258 to 274 (HISDTSVVVKLDNSRDL). A coil 2 region spans residues 275–418 (NMDCIVAEIK…ATYRRLLEGE (144 aa)). The tract at residues 419–493 (EQRLCEGVEA…GGGSCGQGRH (75 aa)) is tail.

Belongs to the intermediate filament family. As to quaternary structure, heterotetramer of two type I and two type II keratins. As to expression, synthesis begins in the cortex 10-15 cell layers above the apex of the dermal papilla and ends abruptly in the middle of the cortex.

In Homo sapiens (Human), this protein is Keratin, type II cuticular Hb3 (KRT83).